A 347-amino-acid polypeptide reads, in one-letter code: Tyrosine recombinase XerC 2 (347 aa).

Residues leucine 17–alanine 108 form the Core-binding (CB) domain. A Tyr recombinase domain is found at lysine 125–aspartate 313. Active-site residues include arginine 170, lysine 195, histidine 265, arginine 268, and histidine 291. Catalysis depends on tyrosine 300, which acts as the O-(3'-phospho-DNA)-tyrosine intermediate.

It belongs to the 'phage' integrase family.

The protein resides in the cytoplasm. Functionally, site-specific tyrosine recombinase, which acts by catalyzing the cutting and rejoining of the recombining DNA molecules. The sequence is that of Tyrosine recombinase XerC 2 from Ralstonia nicotianae (strain ATCC BAA-1114 / GMI1000) (Ralstonia solanacearum).